The chain runs to 256 residues: Ribonuclease HII (256 aa).

The region spanning 73–256 (KLIAGIDEAG…RVSFTKNFIV (184 aa)) is the RNase H type-2 domain. Residues Asp79, Glu80, and Asp171 each contribute to the a divalent metal cation site.

The protein belongs to the RNase HII family. Mn(2+) serves as cofactor. The cofactor is Mg(2+).

It is found in the cytoplasm. The enzyme catalyses Endonucleolytic cleavage to 5'-phosphomonoester.. Endonuclease that specifically degrades the RNA of RNA-DNA hybrids. The sequence is that of Ribonuclease HII from Acetivibrio thermocellus (strain ATCC 27405 / DSM 1237 / JCM 9322 / NBRC 103400 / NCIMB 10682 / NRRL B-4536 / VPI 7372) (Clostridium thermocellum).